We begin with the raw amino-acid sequence, 289 residues long: Carbonyl reductase [NADPH] 1 (289 aa).

At serine 2 the chain carries N-acetylserine. A Phosphoserine modification is found at serine 2. Residues 10 to 34 (VTGA…GDVV), 63 to 64 (DI), and asparagine 90 each bind NADP(+). Glutathione-binding positions include 95–97 (FQL) and glutamine 106. Serine 140 provides a ligand contact to substrate. 193 to 194 (TY) provides a ligand contact to glutathione. Catalysis depends on tyrosine 194, which acts as the Proton acceptor. Residues 194 to 198 (YGVTK) and 231 to 233 (VRT) each bind NADP(+). Lysine 239 carries the post-translational modification N6-1-carboxyethyl lysine.

Belongs to the short-chain dehydrogenases/reductases (SDR) family. In terms of assembly, monomer. As to expression, expressed in kidney (at protein level).

The protein resides in the cytoplasm. It catalyses the reaction a secondary alcohol + NADP(+) = a ketone + NADPH + H(+). The catalysed reaction is prostaglandin E1 + NADP(+) = 15-oxoprostaglandin E1 + NADPH + H(+). It carries out the reaction prostaglandin F2alpha + NADP(+) = prostaglandin E2 + NADPH + H(+). The enzyme catalyses prostaglandin D2 + NADP(+) = 15-oxoprostaglandin D2 + NADPH + H(+). It catalyses the reaction prostaglandin E2 + NADP(+) = 15-oxoprostaglandin E2 + NADPH + H(+). The catalysed reaction is prostaglandin F2alpha + NADP(+) = 15-oxoprostaglandin F2alpha + NADPH + H(+). It carries out the reaction menadione + NADPH + H(+) = menadiol + NADP(+). The enzyme catalyses daunorubicin + NADPH + H(+) = 13-dihydrodaunorubicin + NADP(+). It catalyses the reaction S-nitrosoglutathione + NADPH + H(+) = S-(hydroxysulfenamide)glutathione + NADP(+). The catalysed reaction is a primary alcohol + NADP(+) = an aldehyde + NADPH + H(+). It carries out the reaction cortisol + NADPH + H(+) = 20beta-dihydrocortisol + NADP(+). The enzyme catalyses corticosterone + NADPH + H(+) = 20beta-dihydrocorticosterone + NADP(+). Functionally, NADPH-dependent reductase with broad substrate specificity. Catalyzes the reduction of a wide variety of carbonyl compounds including quinones, prostaglandins, menadione, plus various xenobiotics. Catalyzes the reduction of the antitumor anthracyclines doxorubicin and daunorubicin to the cardiotoxic compounds doxorubicinol and daunorubicinol. Can convert prostaglandin E2 to prostaglandin F2-alpha. Can bind glutathione, which explains its higher affinity for glutathione-conjugated substrates. Catalyzes the reduction of S-nitrosoglutathione. In addition, participates in the glucocorticoid metabolism by catalyzing the NADPH-dependent cortisol/corticosterone into 20beta-dihydrocortisol (20b-DHF) or 20beta-corticosterone (20b-DHB), which are weak agonists of NR3C1 and NR3C2 in adipose tissue. The protein is Carbonyl reductase [NADPH] 1 of Sus scrofa (Pig).